Here is a 612-residue protein sequence, read N- to C-terminus: Dihydroxy-acid dehydratase (612 aa).

Residue Asp81 participates in Mg(2+) binding. Residue Cys122 participates in [2Fe-2S] cluster binding. 2 residues coordinate Mg(2+): Asp123 and Lys124. Lys124 is modified (N6-carboxylysine). Cys195 is a binding site for [2Fe-2S] cluster. Glu491 is a binding site for Mg(2+). The active-site Proton acceptor is the Ser517.

Belongs to the IlvD/Edd family. Homodimer. [2Fe-2S] cluster is required as a cofactor. Mg(2+) serves as cofactor.

It catalyses the reaction (2R)-2,3-dihydroxy-3-methylbutanoate = 3-methyl-2-oxobutanoate + H2O. The enzyme catalyses (2R,3R)-2,3-dihydroxy-3-methylpentanoate = (S)-3-methyl-2-oxopentanoate + H2O. It participates in amino-acid biosynthesis; L-isoleucine biosynthesis; L-isoleucine from 2-oxobutanoate: step 3/4. Its pathway is amino-acid biosynthesis; L-valine biosynthesis; L-valine from pyruvate: step 3/4. Functions in the biosynthesis of branched-chain amino acids. Catalyzes the dehydration of (2R,3R)-2,3-dihydroxy-3-methylpentanoate (2,3-dihydroxy-3-methylvalerate) into 2-oxo-3-methylpentanoate (2-oxo-3-methylvalerate) and of (2R)-2,3-dihydroxy-3-methylbutanoate (2,3-dihydroxyisovalerate) into 2-oxo-3-methylbutanoate (2-oxoisovalerate), the penultimate precursor to L-isoleucine and L-valine, respectively. The protein is Dihydroxy-acid dehydratase of Rhizobium meliloti (strain 1021) (Ensifer meliloti).